The sequence spans 238 residues: Outer membrane protein A (238 aa).

5 beta stranded membrane passes run 1-8 (LTAKLGYP), 13-21 (LDIYTRLGG), 43-52 (PVFAGGVEYA), 57-64 (IATRLEYQ), and 83-91 (LLSVGVSYR). A run of 3 repeats spans residues 104–105 (AP), 106–107 (AP), and 108–109 (AP). The 3 X 2 AA tandem repeats of A-P stretch occupies residues 104-109 (APAPAP). One can recognise an OmpA-like domain in the interval 111–238 (VQTKHFTLKS…RRVEIEVKGI (128 aa)). The cysteines at positions 212 and 224 are disulfide-linked.

Belongs to the outer membrane OOP (TC 1.B.6) superfamily. OmpA family. Monomer and homodimer.

It localises to the cell outer membrane. Functionally, with TolR probably plays a role in maintaining the position of the peptidoglycan cell wall in the periplasm. Acts as a porin with low permeability that allows slow penetration of small solutes; an internal gate slows down solute passage. The protein is Outer membrane protein A of Citrobacter freundii.